Here is a 96-residue protein sequence, read N- to C-terminus: Cytochrome c2 iso-2 (96 aa).

4 residues coordinate heme c: Cys10, Cys13, His14, and Met75.

The protein belongs to the cytochrome c family. In terms of processing, binds 1 heme c group covalently per subunit.

Its function is as follows. Cytochrome c2 is found mainly in purple, non-sulfur, photosynthetic bacteria where it functions as the electron donor to the oxidized bacteriochlorophyll in the photophosphorylation pathway. However, it may also have a role in the respiratory chain and is found in some non-photosynthetic bacteria. The protein is Cytochrome c2 iso-2 of Magnetospirillum fulvum (Rhodospirillum fulvum).